A 443-amino-acid chain; its full sequence is Probable D-serine dehydratase (443 aa).

Lysine 118 bears the N6-(pyridoxal phosphate)lysine mark.

It belongs to the serine/threonine dehydratase family. DsdA subfamily. Pyridoxal 5'-phosphate serves as cofactor.

It carries out the reaction D-serine = pyruvate + NH4(+). This Vibrio parahaemolyticus serotype O3:K6 (strain RIMD 2210633) protein is Probable D-serine dehydratase.